The sequence spans 517 residues: 2-isopropylmalate synthase (517 aa).

One can recognise a Pyruvate carboxyltransferase domain in the interval 5–268; it reads IIIFDTTLRD…DTRINTQEIH (264 aa). Residues Asp-14, His-202, His-204, and Asn-238 each contribute to the Mn(2+) site. A regulatory domain region spans residues 393–517; sequence SLDVITSQTI…ADLKSHKISQ (125 aa).

The protein belongs to the alpha-IPM synthase/homocitrate synthase family. LeuA type 1 subfamily. In terms of assembly, homodimer. Requires Mn(2+) as cofactor.

Its subcellular location is the cytoplasm. It carries out the reaction 3-methyl-2-oxobutanoate + acetyl-CoA + H2O = (2S)-2-isopropylmalate + CoA + H(+). The protein operates within amino-acid biosynthesis; L-leucine biosynthesis; L-leucine from 3-methyl-2-oxobutanoate: step 1/4. Catalyzes the condensation of the acetyl group of acetyl-CoA with 3-methyl-2-oxobutanoate (2-ketoisovalerate) to form 3-carboxy-3-hydroxy-4-methylpentanoate (2-isopropylmalate). The polypeptide is 2-isopropylmalate synthase (Histophilus somni (strain 2336) (Haemophilus somnus)).